Consider the following 642-residue polypeptide: Mini-chromosome maintenance complex-binding protein (642 aa).

Positions 151–161 (ARVSPSTSYTP) are enriched in polar residues. Residues 151–196 (ARVSPSTSYTPSRHKRSYEDDEDMDLQPSKQKEQHPGSRQAGGLGG) form a disordered region. At Ser-154 the chain carries Phosphoserine. Thr-160 is modified (phosphothreonine). A phosphoserine mark is found at Ser-167 and Ser-298.

Belongs to the MCMBP family. Interacts with the MCM complex: associates with the MCM3-7 complex which lacks MCM2, while it does not interact with the MCM complex when MCM2 is present (MCM2-7 complex). Interacts with the RPA complex, when composed of all RPA1, RPA2 and RPA3 components, but not with RPA1 or RPA2 alone.

The protein localises to the nucleus. Its function is as follows. Associated component of the MCM complex that acts as a regulator of DNA replication. Binds to the MCM complex during late S phase and promotes the disassembly of the MCM complex from chromatin, thereby acting as a key regulator of pre-replication complex (pre-RC) unloading from replicated DNA. Can dissociate the MCM complex without addition of ATP; probably acts by destabilizing interactions of each individual subunits of the MCM complex. Required for sister chromatid cohesion. This chain is Mini-chromosome maintenance complex-binding protein (Mcmbp), found in Mus musculus (Mouse).